A 171-amino-acid chain; its full sequence is Disulfide bond formation protein B (171 aa).

Residues 1 to 8 (MQWSYRFV) are Cytoplasmic-facing. Residues 9–25 (SGLLVLASIVGMTFALY) traverse the membrane as a helical segment. Residues 26–43 (LEHFKGLEPCPLCIFQRV) lie on the Periplasmic side of the membrane. Cysteines 35 and 38 form a disulfide. The chain crosses the membrane as a helical span at residues 44-60 (GLMAMGIVALIAFLHNP). The Cytoplasmic segment spans residues 61–67 (VSNAFKR). A helical transmembrane segment spans residues 68–85 (VYAFLATLGILWSVGVAI). Over 86 to 142 (RHVWLQTLPPDQVPSCGPGLNYLLDALPLKTVLQQVLQGSGECAAIHWTFLGQSLPV) the chain is Periplasmic. Residues cysteine 101 and cysteine 128 are joined by a disulfide bond. The chain crosses the membrane as a helical span at residues 143–161 (WSLAYFSLILLVCVWQLLR). The Cytoplasmic portion of the chain corresponds to 162–171 (RYPVIVTKKK).

It belongs to the DsbB family.

Its subcellular location is the cell inner membrane. Its function is as follows. Required for disulfide bond formation in some periplasmic proteins. Acts by oxidizing the DsbA protein. This Acinetobacter baylyi (strain ATCC 33305 / BD413 / ADP1) protein is Disulfide bond formation protein B.